The following is a 186-amino-acid chain: MLKIAWGITGCGDKLPEVVEIMKKLKNKYNLDVDIYLSKNAKIVVKWYKLWQVLEDEFYDLRVEVNANAPFLVGKLQTGKYDLFLVAPATANTTAKIAYGIADTLITNSVAQAMKAKVPVYIFPPDNKKGTVETILPGNKKLTLYMRDVDVENVERLRRMEGIEVLDKPEDIEKVILKHIEVKKQQ.

This sequence to M.jannaschii MJ0208.

This is an uncharacterized protein from Methanocaldococcus jannaschii (strain ATCC 43067 / DSM 2661 / JAL-1 / JCM 10045 / NBRC 100440) (Methanococcus jannaschii).